We begin with the raw amino-acid sequence, 166 residues long: C-signal (166 aa).

In terms of processing, the mature C-signal (p17) is derived from the precursor sequence (p25) by proteolytic cleavage. The subtilisin-like protease PopC is directly responsible for cleavage of p25 to p17. The cleavage site is probably located between amino acid residues 60 and 68 in p25.

Its subcellular location is the secreted. The protein localises to the cell outer membrane. With respect to regulation, synthesized as a precursor protein (p25), which is cleaved after secretion to generate the mature active C-signal (p17). The p25 precursor purified from M.xanthus cells does not display C-signal activity. Functionally, cell-cell signaling protein required for fruiting body formation, a multicellular developmental program that is induced in response to starvation. Necessary for rippling, cellular aggregation, spore differentiation and for gene expression that is initiated after 6 hours of starvation. In starving cells, the C-signal directly induces aggregation and sporulation, which are induced at distinct threshold levels of C-signaling. Contact with C-signaling induces cells to glide with high speed and low stop and reversal frequencies toward aggregation centers. The C-signal acts as a morphogen and induces distinct events at distinct threshold levels. A regulated increase in the level of C-signaling during development ensures the correct temporal order of aggregation and sporulation. This Myxococcus xanthus protein is C-signal.